The sequence spans 770 residues: Transducin-like enhancer protein 1 (770 aa).

Residues 1-131 are q domain; sequence MFPQSRHPTP…IIGQQQLQAQ (131 aa). Disordered regions lie at residues 128 to 157 and 176 to 346; these read LQAQ…GIPP and HLAI…PAME. Positions 132 to 199 are GP domain; that stretch reads HLSHGHGPPV…RHRDRESGTS (68 aa). The span at 146 to 157 shows a compositional bias: low complexity; it reads HPSGLQPPGIPP. Composition is skewed to basic and acidic residues over residues 178–196 and 209–244; these read AIKD…DRES and RSTD…KSDD. Residues 200–266 form a ccN domain region; it reads NSLLVPDSLR…SPHASPTHSP (67 aa). Residues 225-228 carry the Nuclear localization signal motif; sequence KKRK. Phosphoserine; by CK2 is present on serine 237. Residues 255–264 show a composition bias toward low complexity; that stretch reads PSSPHASPTH. 3 positions are modified to phosphoserine; by CDK1: serine 257, serine 261, and serine 265. Residues 265 to 281 show a composition bias toward basic and acidic residues; sequence SPRENGIDKNRLLKKDA. The SP domain stretch occupies residues 267-450; that stretch reads RENGIDKNRL…GGKPAYSFHV (184 aa). The span at 282–297 shows a compositional bias: low complexity; sequence SGSPASTASSGSSSSL. A Phosphoserine modification is found at serine 284. Residues 298–308 show a composition bias toward basic and acidic residues; it reads KSKEVSLHEKA. 6 WD repeats span residues 470–501, 528–558, 572–602, 614–644, 696–726, and 737–767; these read GIPR…HVYT, NRDN…SIWD, SSAP…AVWD, GHTD…RSWD, LHES…NAWR, and KESS…TVYE.

The protein belongs to the WD repeat Groucho/TLE family. In terms of assembly, homooligomer and heterooligomer with other family members. Binds RUNX1, RUNX3, FOXA2, KDM6A, UTY, histone H3, HESX1, ESRRG and the NF-kappa-B subunit RELA. Interacts with HES1 (via WRPW motif). Binds TCF7, LEF1, TCF7L1 and TCF7L2. Interacts with SIX3. Interacts with EFNB1. Interacts with TLE4. Interacts with FOXG1/BF-1; the interaction is inhibited by TLE6/GRG6. Phosphorylated, probably by CDK1. The degree of phosphorylation varies throughout the cell cycle, and is highest at the G2/M transition. Becomes hyperphosphorylated in response to cell differentiation and interaction with HES1 or RUNX1. In terms of processing, ubiquitinated by XIAP/BIRC4. Highly expressed in liver and lung. Detected at slightly lower levels in heart, brain, kidney and testis. Detected in fetal and adult stomach and small intestine, in adult ileum, duodenum and colon. Expressed in bone marrow-derived macrophages. In terms of tissue distribution, most abundant at the base of the crypts of Lieberkuhn in the small intestine.

The protein localises to the nucleus. It localises to the cytoplasm. Its function is as follows. Transcriptional corepressor that binds to a number of transcription factors. Inhibits NF-kappa-B-regulated gene expression. Inhibits the transcriptional activation mediated by FOXA2, and by CTNNB1 and TCF family members in Wnt signaling. Enhances FOXG1/BF-1- and HES1-mediated transcriptional repression. The effects of full-length TLE family members may be modulated by association with dominant-negative AES. Unusual function as coactivator for ESRRG. This chain is Transducin-like enhancer protein 1 (Tle1), found in Mus musculus (Mouse).